A 311-amino-acid polypeptide reads, in one-letter code: Solute carrier family 25 member 36 (311 aa).

Solcar repeat units lie at residues 4–108 (RDTL…CKEK), 116–203 (DSTQ…IKQK), and 224–308 (SDFV…VVYL). 6 consecutive transmembrane segments (helical) span residues 7–27 (LVHL…TCPL), 41–57 (LYIS…ASVN), 111–131 (GVFD…AGFT), 180–200 (MSAS…YESI), 226–246 (FVRM…IAYP), and 291–311 (QIPN…LLNG).

It belongs to the mitochondrial carrier (TC 2.A.29) family.

The protein localises to the mitochondrion inner membrane. The enzyme catalyses UTP(in) + CTP(out) = UTP(out) + CTP(in). It carries out the reaction CTP(out) + UDP(in) = CTP(in) + UDP(out). The catalysed reaction is UMP(in) + CTP(out) = UMP(out) + CTP(in). It catalyses the reaction dUTP(in) + CTP(out) = dUTP(out) + CTP(in). The enzyme catalyses dUMP(in) + CTP(out) = dUMP(out) + CTP(in). It carries out the reaction CDP(in) + CTP(out) = CDP(out) + CTP(in). The catalysed reaction is CTP(out) + CMP(in) = CTP(in) + CMP(out). It catalyses the reaction dCTP(in) + CTP(out) = dCTP(out) + CTP(in). The enzyme catalyses dCDP(in) + CTP(out) = dCDP(out) + CTP(in). It carries out the reaction dCMP(in) + CTP(out) = dCMP(out) + CTP(in). The catalysed reaction is GTP(in) + CTP(out) = GTP(out) + CTP(in). It catalyses the reaction CTP(out) + GDP(in) = CTP(in) + GDP(out). The enzyme catalyses GMP(in) + CTP(out) = GMP(out) + CTP(in). It carries out the reaction dGTP(in) + CTP(out) = dGTP(out) + CTP(in). The catalysed reaction is dGMP(in) + CTP(out) = dGMP(out) + CTP(in). It catalyses the reaction ITP(in) + CTP(out) = ITP(out) + CTP(in). The enzyme catalyses IDP(in) + CTP(out) = IDP(out) + CTP(in). It carries out the reaction IMP(in) + CTP(out) = IMP(out) + CTP(in). The catalysed reaction is CTP(out) = CTP(in). Its function is as follows. Mitochondrial transporter that imports/exports pyrimidine nucleotides into and from mitochondria. Selectively transports cytosine, guanosine, inosine and uridine (deoxy)nucleoside mono-, di-, and triphosphates by antiport mechanism. Catalyzes uniport at much lower rate. May import (deoxy)nucleoside triphosphates in exchange for intramitochondrial (deoxy)nucleoside mono- and diphosphates, thus providing precursors necessary for de novo synthesis of mitochondrial DNA and RNA while exporting products of their catabolism. Participates in mitochondrial genome maintenance, regulation of mitochondrial membrane potential and mitochondrial respiration. The chain is Solute carrier family 25 member 36 (Slc25a36) from Mus musculus (Mouse).